Reading from the N-terminus, the 122-residue chain is Large ribosomal subunit protein uL14c (122 aa).

This sequence belongs to the universal ribosomal protein uL14 family. In terms of assembly, part of the 50S ribosomal subunit.

The protein resides in the plastid. The protein localises to the chloroplast. Functionally, binds to 23S rRNA. The protein is Large ribosomal subunit protein uL14c of Adiantum capillus-veneris (Maidenhair fern).